The sequence spans 632 residues: Sodium- and chloride-dependent GABA transporter 3 (632 aa).

Residues 1-41 are disordered; that stretch reads MTAEKALPLGNGKAAEEARESEAPGGGCSSGGAAPARHPRV. Over 1-58 the chain is Cytoplasmic; sequence MTAEKALPLGNGKAAEEARESEAPGGGCSSGGAAPARHPRVKRDKAVHERGHWNNKVE. S21 is subject to Phosphoserine. 3 helical membrane-spanning segments follow: residues 59 to 79, 87 to 106, and 131 to 151; these read FVLS…FPYL, AFLI…VFFL, and GIGY…IIIL. The Extracellular segment spans residues 152 to 225; that stretch reads AWAIFYLSNC…DGIEHIGNLR (74 aa). Residues N187, N190, and N198 are each glycosylated (N-linked (GlcNAc...) asparagine). Transmembrane regions (helical) follow at residues 226-244, 253-270, 306-323, 335-356, 389-408, 438-456, 473-493, 514-533, and 553-571; these read WELA…FCIW, VVYV…ILLI, IFFS…LGSY, IMLC…FSVL, MPLS…FLGL, LLIL…VMLT, GMCL…VYGS, WCWM…FFLI, and IGWL…WICI. At 572-632 the chain is on the cytoplasmic side; that stretch reads TVWKTEGTLP…AAITEKETHF (61 aa).

It belongs to the sodium:neurotransmitter symporter (SNF) (TC 2.A.22) family. SLC6A11 subfamily. In terms of tissue distribution, widespread distribution in the brain.

The protein resides in the cell membrane. The enzyme catalyses 4-aminobutanoate(out) + chloride(out) + 2 Na(+)(out) = 4-aminobutanoate(in) + chloride(in) + 2 Na(+)(in). It carries out the reaction taurine(out) + chloride(out) + 2 Na(+)(out) = taurine(in) + chloride(in) + 2 Na(+)(in). It catalyses the reaction beta-alanine(out) + chloride(out) + 2 Na(+)(out) = beta-alanine(in) + chloride(in) + 2 Na(+)(in). The catalysed reaction is hypotaurine(out) + chloride(out) + 2 Na(+)(out) = hypotaurine(in) + chloride(in) + 2 Na(+)(in). Its activity is regulated as follows. GABA transport is inhibited by SNAP-5114. Its function is as follows. Mediates sodium- and chloride-dependent transport of gamma-aminobutyric acid (GABA). Can also mediate transport of beta-alanine and to a lower extent that of taurine and hypotaurine. The polypeptide is Sodium- and chloride-dependent GABA transporter 3 (SLC6A11) (Homo sapiens (Human)).